Reading from the N-terminus, the 309-residue chain is MRPKISIIGAGFVGSTAAHWIASKELGDVVLVDIIEGVPQGKGLDLLQAGPIEGFDVKITGTNDYSATAGSDIIVVTSGAPRKPGMSREDLIRVNADITRDCISKAAPLSPNAIIIMVNNPLDTMTYLAKQVSGFPKNRVVGQAGVLDTARYRTFIAMEAGVSVEDIQAMLMGGHGDEMVPLPRFTTISGIPVTEFISKERLDAIVDRTRKGGGEIVNLLKTGSAYYAPSAATVQMVEAILRDKKRVLPCSCYLEGEYGLNDIYFGVPCVLGAGGVERVLELPLNDEEMALVKKSAEAVSSSIAALKAM.

Residues 9 to 14 and Asp-33 each bind NAD(+); that span reads GAGFVG. Residues Arg-82 and Arg-88 each contribute to the substrate site. NAD(+) contacts are provided by residues Asn-95 and 118–120; that span reads VNN. Residues Asn-120 and Arg-151 each contribute to the substrate site. His-175 acts as the Proton acceptor in catalysis.

The protein belongs to the LDH/MDH superfamily. MDH type 3 family.

It catalyses the reaction (S)-malate + NAD(+) = oxaloacetate + NADH + H(+). Its function is as follows. Catalyzes the reversible oxidation of malate to oxaloacetate. The chain is Malate dehydrogenase from Roseiflexus sp. (strain RS-1).